The sequence spans 84 residues: MSQTENAVTSSSGAKRAYRKGNPLSDAEKQRLSVARKRASFKEVKVFLEPKYKAMLMQMCHEDGLTQAEVLTALIKSEAQKRCM.

A compositionally biased stretch (polar residues) spans 1–13 (MSQTENAVTSSSG). A disordered region spans residues 1-31 (MSQTENAVTSSSGAKRAYRKGNPLSDAEKQR).

This protein is involved in the determination of copy number in gene replication. It binds to the repA promoter thus inhibiting the synthesis of the mRNA for the initiator protein RepA. The polypeptide is Replication regulatory protein repA2 (repA2) (Escherichia coli).